A 69-amino-acid chain; its full sequence is MKTQFAVLIISMILMQMLVQTEAGFWGKLWEGVKSAIGKRSLRNQDQFDNMFDSDLSDADLKLLDDLFD.

The first 23 residues, 1-23, serve as a signal peptide directing secretion; the sequence is MKTQFAVLIISMILMQMLVQTEA. Residue isoleucine 37 is modified to Isoleucine amide. Residues 41–69 constitute a propeptide that is removed on maturation; it reads SLRNQDQFDNMFDSDLSDADLKLLDDLFD.

Belongs to the non-disulfide-bridged peptide (NDBP) superfamily. Short antimicrobial peptide (group 4) family. As to expression, expressed by the venom gland.

It localises to the secreted. The protein localises to the target cell membrane. In terms of biological role, antimicrobial peptide that is rapidly bactericidal against Gram-positive bacteria. The chain is Amphipathic peptide StCT2 from Scorpiops tibetanus (Scorpion).